Consider the following 122-residue polypeptide: MKLPRLLQASNSKGVLAEKQALSYLQEQGLRLICQNYYCRFGEIDLIMIDQDTLVFIEVRYRKNSDFGGPFASINKSKQRKIITTAKHYLRTLEDEPFCRFDAIAIDSKSTTPAWIQNAFQE.

Belongs to the UPF0102 family.

This Psychromonas ingrahamii (strain DSM 17664 / CCUG 51855 / 37) protein is UPF0102 protein Ping_1176.